Reading from the N-terminus, the 1433-residue chain is Bacillopeptidase F (1433 aa).

The first 30 residues, 1-30 (MRKKTKNRLISSVLSTVVISSLLFPGAAGA), serve as a signal peptide directing secretion. The propeptide occupies 31 to 194 (SSKVTSPSVK…NMKKAQKAIK (164 aa)). Residues 68–177 (TFLIKFKDLA…KVLPNEKRQL (110 aa)) enclose the Inhibitor I9 domain. Residues 200 to 512 (EWNVDQIDAP…HGLVNAFDAV (313 aa)) enclose the Peptidase S8 domain. Active-site charge relay system residues include Asp227, His274, and Ser452. Residues 756–1433 (SAYKGQNIQV…NGKLNMNTEN (678 aa)) constitute a propeptide that is removed on maturation. A disordered region spans residues 800–830 (KLGVEKPSGKQKKKPVNPKKAKPSANTAVKH). Over residues 808–821 (GKQKKKPVNPKKAK) the composition is skewed to basic residues.

This sequence belongs to the peptidase S8 family.

It localises to the secreted. This Bacillus subtilis (strain 168) protein is Bacillopeptidase F (bpr).